We begin with the raw amino-acid sequence, 385 residues long: 3-dehydroquinate synthase (385 aa).

Residues 122 to 126 (GVIGD), 146 to 147 (TT), Lys159, and Lys168 each bind NAD(+). Zn(2+)-binding residues include Glu201, His264, and His282.

Belongs to the sugar phosphate cyclases superfamily. Dehydroquinate synthase family. It depends on Co(2+) as a cofactor. The cofactor is Zn(2+). NAD(+) is required as a cofactor.

The protein resides in the cytoplasm. The catalysed reaction is 7-phospho-2-dehydro-3-deoxy-D-arabino-heptonate = 3-dehydroquinate + phosphate. Its pathway is metabolic intermediate biosynthesis; chorismate biosynthesis; chorismate from D-erythrose 4-phosphate and phosphoenolpyruvate: step 2/7. Catalyzes the conversion of 3-deoxy-D-arabino-heptulosonate 7-phosphate (DAHP) to dehydroquinate (DHQ). This chain is 3-dehydroquinate synthase, found in Rhodospirillum rubrum (strain ATCC 11170 / ATH 1.1.1 / DSM 467 / LMG 4362 / NCIMB 8255 / S1).